The following is a 567-amino-acid chain: Dihydrolipoyllysine-residue acetyltransferase component of pyruvate dehydrogenase complex (567 aa).

Lipoyl-binding domains are found at residues 2–75 (SKQI…LVLE) and 108–181 (IVEV…MRFE). An N6-lipoyllysine mark is found at K41 and K147. Positions 192 to 238 (SAPASTSAPQTAAPATTAQAPQAAAPDTTAQAPQAAAPDTTAQAAQS) are enriched in low complexity. Positions 192 to 249 (SAPASTSAPQTAAPATTAQAPQAAAPDTTAQAPQAAAPDTTAQAAQSNNNVSGLSQEQ) are disordered. Residues 239-249 (NNNVSGLSQEQ) are compositionally biased toward polar residues. The Peripheral subunit-binding (PSBD) domain occupies 258–295 (HATPVIRRLAREFGVNLDKVKGTGRKGRIVKEDIEAYV). Catalysis depends on residues C484, H540, and D544.

The protein belongs to the 2-oxoacid dehydrogenase family. In terms of assembly, forms a 24-polypeptide structural core with octahedral symmetry. It depends on (R)-lipoate as a cofactor.

The enzyme catalyses N(6)-[(R)-dihydrolipoyl]-L-lysyl-[protein] + acetyl-CoA = N(6)-[(R)-S(8)-acetyldihydrolipoyl]-L-lysyl-[protein] + CoA. The pyruvate dehydrogenase complex catalyzes the overall conversion of pyruvate to acetyl-CoA and CO(2). It contains multiple copies of three enzymatic components: pyruvate dehydrogenase (E1), dihydrolipoamide acetyltransferase (E2) and lipoamide dehydrogenase (E3). The sequence is that of Dihydrolipoyllysine-residue acetyltransferase component of pyruvate dehydrogenase complex (aceF) from Haemophilus influenzae (strain ATCC 51907 / DSM 11121 / KW20 / Rd).